We begin with the raw amino-acid sequence, 151 residues long: Probable desiccation-related protein LEA14 (151 aa).

This sequence belongs to the LEA type 2 family.

The chain is Probable desiccation-related protein LEA14 (LEA14) from Arabidopsis thaliana (Mouse-ear cress).